The sequence spans 88 residues: MKKTALLAALCSVVSLSSCCRIVDCCFEDPCAPIKCSPCESKKREVNGGCNSCNGYVPSCKPCGGELDHETKQGPQARGIQADGRCRQ.

Positions 1 to 18 are cleaved as a signal peptide; sequence MKKTALLAALCSVVSLSS. C19 is lipidated: N-palmitoyl cysteine. C19 carries S-diacylglycerol cysteine lipidation.

As to quaternary structure, part of a disulfide cross-linked outer membrane complex (COMC) composed of the major outer membrane porin (MOMP), the small cysteine-rich protein (OmcA) and the large cysteine-rich periplasmic protein (OmcB).

Its subcellular location is the cell outer membrane. Its function is as follows. In elementary bodies (EBs, the infectious stage, which is able to survive outside the host cell) provides the structural integrity of the outer envelope through disulfide cross-links with the large cysteine-rich periplasmic protein and the major outer membrane porin. It has been described in publications as the Sarkosyl-insoluble COMC (Chlamydia outer membrane complex), and serves as the functional equivalent of peptidoglycan. The chain is Small cysteine-rich outer membrane protein OmcA (omcA) from Chlamydia muridarum (strain MoPn / Nigg).